A 20-amino-acid polypeptide reads, in one-letter code: Dentinal fluid transport-stimulating peptide (20 aa).

Positions 1-20 (GVIAWELQHNEPGRKDSTAG) are disordered. A compositionally biased stretch (basic and acidic residues) spans 8-20 (QHNEPGRKDSTAG).

Its function is as follows. This peptide stimulates the transport of dentinal fluid, which is important for the prevention of dental caries. In Rattus norvegicus (Rat), this protein is Dentinal fluid transport-stimulating peptide.